A 108-amino-acid chain; its full sequence is AFAGILADADCAAAVKACEAADSFSYKAFFAKCGLSGKSADDIKKAFVFIDQDKSGFIEEDELKLFLQVFKAGARALTDAETKAFLKAGDSDGDGAIGVEEWVALVKA.

The residue at position 1 (Ala1) is an N-acetylalanine. Cys11 and Cys33 form a disulfide bridge. 2 EF-hand domains span residues 38-73 (KSAD…FKAG) and 77-108 (LTDA…LVKA). Ca(2+) is bound by residues Asp51, Asp53, Ser55, Phe57, Glu59, Glu62, Asp90, Asp92, Asp94, Ala96, and Glu101.

The protein belongs to the parvalbumin family.

In terms of biological role, in muscle, parvalbumin is thought to be involved in relaxation after contraction. It binds two calcium ions. The chain is Parvalbumin beta from Merlangius merlangus (Whiting).